Reading from the N-terminus, the 248-residue chain is Adenosylcobinamide-GDP ribazoletransferase (248 aa).

A run of 6 helical transmembrane segments spans residues 34–54 (LVFA…LFYI), 58–78 (FFPP…LTGG), 113–133 (AVLA…SIPL), 139–159 (ALLL…GSTV), 185–205 (IIYF…LAAA), and 227–247 (DILG…FYLF).

The protein belongs to the CobS family. Mg(2+) is required as a cofactor.

Its subcellular location is the cell membrane. The enzyme catalyses alpha-ribazole + adenosylcob(III)inamide-GDP = adenosylcob(III)alamin + GMP + H(+). It carries out the reaction alpha-ribazole 5'-phosphate + adenosylcob(III)inamide-GDP = adenosylcob(III)alamin 5'-phosphate + GMP + H(+). Its pathway is cofactor biosynthesis; adenosylcobalamin biosynthesis; adenosylcobalamin from cob(II)yrinate a,c-diamide: step 7/7. Functionally, joins adenosylcobinamide-GDP and alpha-ribazole to generate adenosylcobalamin (Ado-cobalamin). Also synthesizes adenosylcobalamin 5'-phosphate from adenosylcobinamide-GDP and alpha-ribazole 5'-phosphate. The protein is Adenosylcobinamide-GDP ribazoletransferase of Acetivibrio thermocellus (strain ATCC 27405 / DSM 1237 / JCM 9322 / NBRC 103400 / NCIMB 10682 / NRRL B-4536 / VPI 7372) (Clostridium thermocellum).